The primary structure comprises 30 residues: Rothein 3.4 (30 aa).

The residue at position 30 (Leu-30) is a Leucine amide.

The protein belongs to the frog skin active peptide (FSAP) family. Rothein subfamily. As to expression, expressed by the skin dorsal glands.

It is found in the secreted. Lacks antimicrobial activity. Does not inhibit the formation of NO by neuronal nitric oxide. The polypeptide is Rothein 3.4 (Litoria rothii (Roth's tree frog)).